A 388-amino-acid polypeptide reads, in one-letter code: Gastricsin (388 aa).

The first 16 residues, 1–16 (MKWLLVALVCLHLLEA), serve as a signal peptide directing secretion. Positions 17 to 59 (AVIKVPLRKFKSIRETLKEKGLLKEFLNTHKYDPALKYRFGDF) are cleaved as a propeptide — activation peptide. A Peptidase A1 domain is found at 73–385 (YFGEISIGTP…DMANNRVGFA (313 aa)). D91 is a catalytic residue. 2 cysteine pairs are disulfide-bonded: C104-C109 and C267-C271. D276 is a catalytic residue. A disulfide bridge connects residues C310 and C343.

Belongs to the peptidase A1 family.

It localises to the secreted. The catalysed reaction is More restricted specificity than pepsin A, but shows preferential cleavage at Tyr-|-Xaa bonds. High activity on hemoglobin.. Functionally, hydrolyzes a variety of proteins. In Oryctolagus cuniculus (Rabbit), this protein is Gastricsin (PGC).